A 136-amino-acid chain; its full sequence is Acyl carrier protein 1, chloroplastic (136 aa).

The transit peptide at 1–52 (MASVTGTSISMASFKASLAPSRVSNLRSVSLPIKGKSFAPLRMRSARFVVCC) directs the protein to the chloroplast. The 76-residue stretch at 56–131 (PETVEKVCAI…DAADLIEKLI (76 aa)) folds into the Carrier domain. Residue Ser91 is modified to O-(pantetheine 4'-phosphoryl)serine.

Belongs to the acyl carrier protein (ACP) family. Post-translationally, 4'-phosphopantetheine is transferred from CoA to a specific serine of apo-ACP by acpS. This modification is essential for activity because fatty acids are bound in thioester linkage to the sulfhydryl of the prosthetic group.

Its subcellular location is the plastid. The protein resides in the chloroplast. It functions in the pathway lipid metabolism; fatty acid biosynthesis. Its function is as follows. Carrier of the growing fatty acid chain in fatty acid biosynthesis. In Casuarina glauca (Swamp oak), this protein is Acyl carrier protein 1, chloroplastic (ACP1).